Consider the following 245-residue polypeptide: 3-deoxy-manno-octulosonate cytidylyltransferase (245 aa).

This sequence belongs to the KdsB family.

The protein resides in the cytoplasm. The enzyme catalyses 3-deoxy-alpha-D-manno-oct-2-ulosonate + CTP = CMP-3-deoxy-beta-D-manno-octulosonate + diphosphate. Its pathway is nucleotide-sugar biosynthesis; CMP-3-deoxy-D-manno-octulosonate biosynthesis; CMP-3-deoxy-D-manno-octulosonate from 3-deoxy-D-manno-octulosonate and CTP: step 1/1. It participates in bacterial outer membrane biogenesis; lipopolysaccharide biosynthesis. Functionally, activates KDO (a required 8-carbon sugar) for incorporation into bacterial lipopolysaccharide in Gram-negative bacteria. The protein is 3-deoxy-manno-octulosonate cytidylyltransferase of Rhodopseudomonas palustris (strain TIE-1).